The primary structure comprises 368 residues: Transcription factor TGA7 (368 aa).

The segment covering 70-82 (HNQIEAEQPSSND) has biased composition (polar residues). A disordered region spans residues 70 to 89 (HNQIEAEQPSSNDNQDDDGR). One can recognise a bZIP domain in the interval 91–151 (HDKMKRRLAQ…LGPSGSINTG (61 aa)). 2 coiled-coil regions span residues 92 to 142 (DKMK…QGHL) and 252 to 285 (DQQILEVRNLQQSSQQAEDALSQGIDKLQQSLAE). Positions 93–113 (KMKRRLAQNREAARKSRLRKK) are basic motif. Residues 119 to 133 (LEESRLKLSQLEQEL) form a leucine-zipper region. The region spanning 152 to 363 (IASFEMEYSH…RALSSLWAAR (212 aa)) is the DOG1 domain.

This sequence belongs to the bZIP family. Binds DNA as a dimer. Interacts with NPR1 and NPR4. Interacts with GRXC7/ROXY1.

The protein resides in the nucleus. Functionally, transcriptional activator that binds specifically to the DNA sequence 5'-TGACG-3'. Recognizes ocs elements like the as-1 motif of the cauliflower mosaic virus 35S promoter. Binding to the as-1-like cis elements mediate auxin- and salicylic acid-inducible transcription. May be involved in the induction of the systemic acquired resistance (SAR) via its interaction with NPR1. This is Transcription factor TGA7 (TGA7) from Arabidopsis thaliana (Mouse-ear cress).